A 1516-amino-acid polypeptide reads, in one-letter code: Lysine-specific demethylase 5C (1516 aa).

A JmjN domain is found at 14-55; the sequence is CPVFEPSWAEFRDPLGYIAKIRPIAEKSGICKIRPPADWQPP. The 105-residue stretch at 24-128 folds into the ARID domain; it reads FRDPLGYIAK…IVYPYEMYQS (105 aa). The span at 142–151 shows a compositional bias: basic and acidic residues; the sequence is NEEKDKEYKP. Positions 142 to 186 are disordered; sequence NEEKDKEYKPHSIPLRQSVQPSKFNSYGRRAKRLQPDPEPTEEDI. Positions 156 to 166 are enriched in polar residues; the sequence is LRQSVQPSKFN. Glycyl lysine isopeptide (Lys-Gly) (interchain with G-Cter in SUMO2) cross-links involve residues Lys164, Lys188, Lys203, and Lys233. A disordered region spans residues 216 to 262; that stretch reads LRKKDKEGPECPPTVVVKEESGGDVKVESTSPKTFLESKEELSHSPE. Residues 232–242 are compositionally biased toward basic and acidic residues; it reads VKEESGGDVKV. Ser246 bears the Phosphoserine mark. Lys254 is covalently cross-linked (Glycyl lysine isopeptide (Lys-Gly) (interchain with G-Cter in SUMO2)). Residues Ser260 and Ser276 each carry the phosphoserine modification. A PHD-type 1 zinc finger spans residues 283-333; sequence SYVCRMCSRGDEDDKLLLCDGCDDNYHIFCLLPPLPEIPKGVWRCPKCVMA. Residue Tyr399 coordinates 2-oxoglutarate. In terms of domain architecture, JmjC spans 427–593; it reads EYATSGWNLN…AGRQCIEHYR (167 aa). His473 and Glu475 together coordinate Fe cation. The 2-oxoglutarate site is built by Ser481, Asn483, and Lys491. His561 provides a ligand contact to Fe cation. The C5HC2 zinc-finger motif lies at 666–718; sequence CIKCKTTCFLSALACYDCPDGLVCLSHINDLCKCSSSRQYLRYRYTLDELPAM. A phosphoserine mark is found at Ser852 and Ser856. Residue Lys1086 forms a Glycyl lysine isopeptide (Lys-Gly) (interchain with G-Cter in SUMO2) linkage. The PHD-type 2 zinc finger occupies 1144–1209; sequence TSICVCGQVP…KFLCPLCMRS (66 aa). The tract at residues 1274–1305 is disordered; that stretch reads LQAEPRPEEPPTYPSTPAFDPLREGSGKDMPK. Residues 1294–1304 show a composition bias toward basic and acidic residues; it reads PLREGSGKDMP. Phosphoserine is present on Ser1318. Positions 1400 to 1516 are disordered; sequence ERHGSRARGR…CPQQPPQQQL (117 aa). A compositionally biased stretch (basic residues) spans 1404–1419; it reads SRARGRALERRRRRKV. Residues 1420 to 1437 are compositionally biased toward basic and acidic residues; the sequence is DRGGEGDDPAREELEPKR. Positions 1444–1459 are enriched in acidic residues; the sequence is EAEEAHEEEELEEETG. Composition is skewed to polar residues over residues 1471 to 1481 and 1489 to 1500; these read GSPSTQENQNG and SSGSSVPFSTLT.

The protein belongs to the JARID1 histone demethylase family. Part of two distinct complexes, one containing E2F6, and the other containing REST. Interacts with ZMYND8. Fe(2+) serves as cofactor.

Its subcellular location is the nucleus. It carries out the reaction N(6),N(6),N(6)-trimethyl-L-lysyl(4)-[histone H3] + 3 2-oxoglutarate + 3 O2 = L-lysyl(4)-[histone H3] + 3 formaldehyde + 3 succinate + 3 CO2. Its function is as follows. Histone demethylase that specifically demethylates 'Lys-4' of histone H3, thereby playing a central role in histone code. Does not demethylate histone H3 'Lys-9', H3 'Lys-27', H3 'Lys-36', H3 'Lys-79' or H4 'Lys-20'. Demethylates trimethylated and dimethylated but not monomethylated H3 'Lys-4'. Participates in transcriptional repression of neuronal genes by recruiting histone deacetylases and REST at neuron-restrictive silencer elements. The sequence is that of Lysine-specific demethylase 5C (KDM5C) from Sus scrofa (Pig).